Consider the following 1368-residue polypeptide: Indole-3-acetaldehyde oxidase (1368 aa).

Residues Thr19–Leu108 enclose the 2Fe-2S ferredoxin-type domain. 3 residues coordinate [2Fe-2S] cluster: Cys60, Cys65, and Cys68. Positions Leu246–Ser427 constitute an FAD-binding PCMH-type domain.

The protein belongs to the xanthine dehydrogenase family. In terms of assembly, aldehyde oxidases (AO) are homodimers and heterodimers of AO subunits. AO-alpha is an AAO1 homodimer; AO-beta is an AAO1-AAO2 heterodimer. It depends on [2Fe-2S] cluster as a cofactor. FAD serves as cofactor. Requires Mo-molybdopterin as cofactor. As to expression, predominantly expressed in roots, seedlings, mature siliques and seeds, and to lower extent in stems and rosettes. In seedlings, mostly expressed in lower part of hypocotyls and roots.

It is found in the cytoplasm. The catalysed reaction is indole-3-acetaldehyde + O2 + H2O = (indol-3-yl)acetate + H2O2 + H(+). Its activity is regulated as follows. Strongly inhibited by iodoacetate and potassium cyanide (KCN). Weakly inhibited by 2-mercaptoethanol, dithiothreitol (DTT), menadione, estradiol, 4'-(9-acridinylamino)methanesulfon-m-anisidine (mAMSA), allopurinol and tritonX-100. Not affected by p-chloromercuribenzoate. Functionally, in higher plants aldehyde oxidases (AO) appear to be homo- and heterodimeric assemblies of AO subunits with probably different physiological functions. AO-alpha may be involved in the biosynthesis of auxin, and in biosynthesis of abscisic acid (ABA) in seeds. In vitro, AO-alpha uses heptaldehyde, protocatechualdehyde, benzaldehyde, indole-3-aldehyde (IAld), indole-3-acetaldehyde (IAAld), cinnamaldehyde and citral as substrates; AO-beta uses IAAld, IAld and naphtaldehyde as substrates. This Arabidopsis thaliana (Mouse-ear cress) protein is Indole-3-acetaldehyde oxidase (AAO1).